The primary structure comprises 143 residues: Class II hydrophobin qid3 (143 aa).

Positions 1 to 17 are cleaved as a signal peptide; it reads MKFLTVAAVFFTAVLAA. A compositionally biased stretch (pro residues) spans 20 to 37; the sequence is NYPPPPPPTYAPPPPTYT. The interval 20 to 67 is disordered; it reads NYPPPPPPTYAPPPPTYTLPPNGNGGGNGNGNGNGNGGGNGNGNGNTN. 10 tandem repeats follow at residues 41–42, 43–44, 47–48, 49–50, 51–52, 53–54, 55–56, 59–60, 61–62, and 63–64. The 10 X 2 AA repeats of N-G stretch occupies residues 41–64; it reads NGNGGGNGNGNGNGNGGGNGNGNG. A compositionally biased stretch (gly residues) spans 42-63; it reads GNGGGNGNGNGNGNGGGNGNGN. 3 cysteine pairs are disulfide-bonded: Cys74-Cys124, Cys85-Cys97, and Cys125-Cys136.

It belongs to the cerato-ulmin hydrophobin family. Homotetramer. Further self-assembles to form highly ordered films at water-air interfaces through intermolecular interactions.

Its subcellular location is the secreted. It is found in the cell wall. In terms of biological role, aerial growth, conidiation, and dispersal of filamentous fungi in the environment rely upon a capability of their secreting small amphipathic proteins called hydrophobins (HPBs) with low sequence identity. Class I can self-assemble into an outermost layer of rodlet bundles on aerial cell surfaces, conferring cellular hydrophobicity that supports fungal growth, development and dispersal; whereas Class II form highly ordered films at water-air interfaces through intermolecular interactions but contribute nothing to the rodlet structure. Qid3 is a class II hydrophobin that might acts as a chitinase inhibitor at the cell surface that blocks the degradation of the chitin rings localized in the budding region of dividing cells. The polypeptide is Class II hydrophobin qid3 (Trichoderma harzianum (Hypocrea lixii)).